The chain runs to 479 residues: Glutamate--tRNA ligase (479 aa).

The short motif at 9 to 19 (PSPTGNLHIGT) is the 'HIGH' region element. The 'KMSKS' region signature appears at 243-247 (KLSKR). Lys-246 provides a ligand contact to ATP.

It belongs to the class-I aminoacyl-tRNA synthetase family. Glutamate--tRNA ligase type 1 subfamily. As to quaternary structure, monomer.

It is found in the cytoplasm. It catalyses the reaction tRNA(Glu) + L-glutamate + ATP = L-glutamyl-tRNA(Glu) + AMP + diphosphate. Catalyzes the attachment of glutamate to tRNA(Glu) in a two-step reaction: glutamate is first activated by ATP to form Glu-AMP and then transferred to the acceptor end of tRNA(Glu). The chain is Glutamate--tRNA ligase from Synechococcus sp. (strain JA-3-3Ab) (Cyanobacteria bacterium Yellowstone A-Prime).